Here is a 690-residue protein sequence, read N- to C-terminus: Translation initiation factor IF-2 (690 aa).

The 169-residue stretch at 178–346 folds into the tr-type G domain; that stretch reads PRPPVVTVMG…MILLVAEMNE (169 aa). The G1 stretch occupies residues 187–194; that stretch reads GHVDHGKT. 187–194 is a GTP binding site; the sequence is GHVDHGKT. Positions 212–216 are G2; that stretch reads GITQS. The tract at residues 233–236 is G3; the sequence is DTPG. Residues 233 to 237 and 287 to 290 contribute to the GTP site; these read DTPGH and NKID. Residues 287–290 form a G4 region; sequence NKID. The G5 stretch occupies residues 324 to 326; sequence SAR.

Belongs to the TRAFAC class translation factor GTPase superfamily. Classic translation factor GTPase family. IF-2 subfamily.

It is found in the cytoplasm. Its function is as follows. One of the essential components for the initiation of protein synthesis. Protects formylmethionyl-tRNA from spontaneous hydrolysis and promotes its binding to the 30S ribosomal subunits. Also involved in the hydrolysis of GTP during the formation of the 70S ribosomal complex. The protein is Translation initiation factor IF-2 of Thermotoga sp. (strain RQ2).